We begin with the raw amino-acid sequence, 98 residues long: uncharacterized protein (98 aa).

It belongs to the YciI family. Homodimer.

This is an uncharacterized protein from Haemophilus influenzae (strain ATCC 51907 / DSM 11121 / KW20 / Rd).